The chain runs to 251 residues: Adapter protein MecA (251 aa).

Belongs to the MecA family. Homodimer.

Enables the recognition and targeting of unfolded and aggregated proteins to the ClpC protease or to other proteins involved in proteolysis. The sequence is that of Adapter protein MecA from Streptococcus agalactiae serotype III (strain NEM316).